The sequence spans 1216 residues: ATP-dependent helicase/nuclease subunit A (1216 aa).

The UvrD-like helicase ATP-binding domain maps to 26 to 488 (QKKTAEQIEA…ILLKENFRSS (463 aa)). Position 47-54 (47-54 (ASAGSGKT)) interacts with ATP. Residues 515 to 802 (KHQLVFANTK…ELMTIHKSKG (288 aa)) form the UvrD-like helicase C-terminal domain.

This sequence belongs to the helicase family. AddA subfamily. In terms of assembly, heterodimer of AddA and AddB/RexB. Requires Mg(2+) as cofactor.

The catalysed reaction is Couples ATP hydrolysis with the unwinding of duplex DNA by translocating in the 3'-5' direction.. It catalyses the reaction ATP + H2O = ADP + phosphate + H(+). Its function is as follows. The heterodimer acts as both an ATP-dependent DNA helicase and an ATP-dependent, dual-direction single-stranded exonuclease. Recognizes the chi site generating a DNA molecule suitable for the initiation of homologous recombination. The AddA nuclease domain is required for chi fragment generation; this subunit has the helicase and 3' -&gt; 5' nuclease activities. The polypeptide is ATP-dependent helicase/nuclease subunit A (Streptococcus pneumoniae (strain Hungary19A-6)).